Consider the following 104-residue polypeptide: COX assembly mitochondrial protein 1 (104 aa).

The region spanning 10 to 52 is the CHCH domain; the sequence is QKQCADLIRALEECHKSFGKFFGECNTIKYELKACLTKDRNDK. 2 consecutive short sequence motifs (cx9C motif) follow at residues 13 to 23 and 34 to 44; these read CADLIRALEEC and CNTIKYELKAC. Cystine bridges form between Cys13–Cys44 and Cys23–Cys34.

This sequence belongs to the CMC family.

Its subcellular location is the mitochondrion inner membrane. Functionally, required for mitochondrial cytochrome c oxidase (COX) assembly and respiration. The polypeptide is COX assembly mitochondrial protein 1 (cmc1) (Schizosaccharomyces pombe (strain 972 / ATCC 24843) (Fission yeast)).